The following is a 202-amino-acid chain: Large ribosomal subunit protein bL17 (202 aa).

Over residues 130-142 the composition is skewed to low complexity; it reads AAPAATAPAPVEE. The segment at 130 to 202 is disordered; sequence AAPAATAPAP…TEESTEDDKA (73 aa). Composition is skewed to acidic residues over residues 143–168 and 177–202; these read APAE…EASP and QPVE…DDKA.

This sequence belongs to the bacterial ribosomal protein bL17 family. Part of the 50S ribosomal subunit. Contacts protein L32.

This chain is Large ribosomal subunit protein bL17, found in Nocardioides sp. (strain ATCC BAA-499 / JS614).